The sequence spans 342 residues: HPr kinase/phosphorylase (342 aa).

Catalysis depends on residues histidine 153 and lysine 174. 168–175 (GKSGLGKS) serves as a coordination point for ATP. Residue serine 175 coordinates Mg(2+). The active-site Proton acceptor; for phosphorylation activity. Proton donor; for dephosphorylation activity is aspartate 192. Positions 217–226 (MEIRGLGVVD) are important for the catalytic mechanism of both phosphorylation and dephosphorylation. Glutamate 218 contacts Mg(2+). The active site involves arginine 259. The important for the catalytic mechanism of dephosphorylation stretch occupies residues 280–285 (PIFPGK).

The protein belongs to the HPrK/P family. In terms of assembly, homohexamer. The cofactor is Mg(2+).

It catalyses the reaction [HPr protein]-L-serine + ATP = [HPr protein]-O-phospho-L-serine + ADP + H(+). It carries out the reaction [HPr protein]-O-phospho-L-serine + phosphate + H(+) = [HPr protein]-L-serine + diphosphate. Catalyzes the ATP- as well as the pyrophosphate-dependent phosphorylation of a specific serine residue in HPr, a phosphocarrier protein of the phosphoenolpyruvate-dependent sugar phosphotransferase system (PTS). HprK/P also catalyzes the pyrophosphate-producing, inorganic phosphate-dependent dephosphorylation (phosphorolysis) of seryl-phosphorylated HPr (P-Ser-HPr). This is HPr kinase/phosphorylase from Chlorobaculum tepidum (strain ATCC 49652 / DSM 12025 / NBRC 103806 / TLS) (Chlorobium tepidum).